The primary structure comprises 496 residues: Aminoacetaldehyde dehydrogenase (496 aa).

NADH contacts are provided by leucine 166, tryptophan 168, lysine 192, serine 246, threonine 249, and tyrosine 256. Glutamate 268 acts as the Proton acceptor in catalysis. Cysteine 269 serves as a coordination point for NADH. Cysteine 303 serves as the catalytic Nucleophile. Lysine 353 and glutamate 398 together coordinate NADH.

It belongs to the aldehyde dehydrogenase family. As to quaternary structure, homotetramer, formed by two symmetrical dimers.

It carries out the reaction aminoacetaldehyde + NAD(+) + H2O = glycine + NADH + 2 H(+). The catalysed reaction is 3-aminopropanal + NAD(+) + H2O = beta-alanine + NADH + 2 H(+). Functionally, NAD(+)-dependent aminoaldehyde dehydrogenase highly efficient with protonated aminoacetaldehyde (ACTAL) and 3-aminopropanaldehyde (APAL). Likely participates in a still uncharacterized metabolic pathway present in proteobacteria species, in which ACTAL might be an intermediate, yielding glycine. Highly prefers NAD(+) over NADP(+). Shows very poor activity with acetaldehyde, propanaldehyde, butanaldehyde, pentanaldehyde, dimethylaminoacetaldehyde, trimethylaminoacetaldehyde (betaine aldehyde), trimethylaminobutanaldehyde, short aliphatic hydroxyaldehydes such as 3-hydroxypropanaldehyde and 2-hydroxypropanaldehyde (lactaldehyde), and aromatic aldehydes. The protein is Aminoacetaldehyde dehydrogenase of Pseudomonas aeruginosa (strain ATCC 15692 / DSM 22644 / CIP 104116 / JCM 14847 / LMG 12228 / 1C / PRS 101 / PAO1).